Consider the following 284-residue polypeptide: Shikimate dehydrogenase (NADP(+)) (284 aa).

Residues 20–22 (SIS) and S67 each bind shikimate. K71 acts as the Proton acceptor in catalysis. D83 is an NADP(+) binding site. Shikimate is bound by residues N92 and D107. NADP(+) contacts are provided by residues 129-133 (GAGGA) and I227. Shikimate is bound at residue Y229. G250 provides a ligand contact to NADP(+).

It belongs to the shikimate dehydrogenase family. Homodimer.

It carries out the reaction shikimate + NADP(+) = 3-dehydroshikimate + NADPH + H(+). It participates in metabolic intermediate biosynthesis; chorismate biosynthesis; chorismate from D-erythrose 4-phosphate and phosphoenolpyruvate: step 4/7. In terms of biological role, involved in the biosynthesis of the chorismate, which leads to the biosynthesis of aromatic amino acids. Catalyzes the reversible NADPH linked reduction of 3-dehydroshikimate (DHSA) to yield shikimate (SA). This chain is Shikimate dehydrogenase (NADP(+)), found in Streptococcus pneumoniae (strain Taiwan19F-14).